The following is a 219-amino-acid chain: Small ribosomal subunit protein uS3c (219 aa).

The KH type-2 domain maps to Ile-39–Glu-118.

The protein belongs to the universal ribosomal protein uS3 family. Part of the 30S ribosomal subunit.

The protein localises to the plastid. In Cuscuta obtusiflora (Peruvian dodder), this protein is Small ribosomal subunit protein uS3c (rps3).